The primary structure comprises 329 residues: Diaminopimelate epimerase (329 aa).

Substrate-binding residues include asparagine 14 and asparagine 73. Cysteine 82 acts as the Proton donor in catalysis. Substrate-binding positions include 83-84, asparagine 170, asparagine 206, and 224-225; these read GN and ER. The active-site Proton acceptor is cysteine 233. A substrate-binding site is contributed by 234–235; sequence GT.

It belongs to the diaminopimelate epimerase family. Homodimer.

The protein localises to the cytoplasm. The enzyme catalyses (2S,6S)-2,6-diaminopimelate = meso-2,6-diaminopimelate. Its pathway is amino-acid biosynthesis; L-lysine biosynthesis via DAP pathway; DL-2,6-diaminopimelate from LL-2,6-diaminopimelate: step 1/1. Functionally, catalyzes the stereoinversion of LL-2,6-diaminopimelate (L,L-DAP) to meso-diaminopimelate (meso-DAP), a precursor of L-lysine and an essential component of the bacterial peptidoglycan. This chain is Diaminopimelate epimerase, found in Listeria innocua serovar 6a (strain ATCC BAA-680 / CLIP 11262).